Here is a 218-residue protein sequence, read N- to C-terminus: MNQDDKKKAVAQAAVRYVEQDSIIGVGTGSTVNYFIEALAPIKNDIVGAVSSSEASTERLTALGIEVFDLNSVDQLSVYVDGADEITEHRHMIKGGGAALTREKIVAAVAQKFVCIIDDTKNVGVLGAFPLPVEVIPMARSYVAREIVKLGGDPVYRQGVVTDNGNVILDVHNLKILNPVELERQLNNIVGVVTNGLFAARGADVVLTGSESGVQVNE.

Residues 28 to 31, 81 to 84, and 94 to 97 contribute to the substrate site; these read TGST, DGAD, and KGGG. Residue glutamate 103 is the Proton acceptor of the active site. A substrate-binding site is contributed by lysine 121.

This sequence belongs to the ribose 5-phosphate isomerase family. Homodimer.

It carries out the reaction aldehydo-D-ribose 5-phosphate = D-ribulose 5-phosphate. The protein operates within carbohydrate degradation; pentose phosphate pathway; D-ribose 5-phosphate from D-ribulose 5-phosphate (non-oxidative stage): step 1/1. Catalyzes the reversible conversion of ribose-5-phosphate to ribulose 5-phosphate. This Pseudoalteromonas atlantica (strain T6c / ATCC BAA-1087) protein is Ribose-5-phosphate isomerase A.